Here is a 282-residue protein sequence, read N- to C-terminus: HTH-type transcriptional activator RhaR (282 aa).

The 99-residue stretch at 179-277 (DKLITALANS…GMTPSQWRHL (99 aa)) folds into the HTH araC/xylS-type domain. 2 consecutive DNA-binding regions (H-T-H motif) follow at residues 196–217 (DAFC…RAQT) and 244–267 (ISEI…TRET).

In terms of assembly, binds DNA as a dimer.

The protein resides in the cytoplasm. Activates expression of the rhaSR operon in response to L-rhamnose. This is HTH-type transcriptional activator RhaR from Salmonella arizonae (strain ATCC BAA-731 / CDC346-86 / RSK2980).